The following is a 511-amino-acid chain: 2-isopropylmalate synthase (511 aa).

One can recognise a Pyruvate carboxyltransferase domain in the interval 5–267 (LIIFDTTLRD…DTNIDTMHIL (263 aa)). Residues Asp14, His202, His204, and Asn238 each coordinate Mn(2+). Positions 393 to 511 (KLVSLKVCTE…TVTNKAHPQI (119 aa)) are regulatory domain.

It belongs to the alpha-IPM synthase/homocitrate synthase family. LeuA type 1 subfamily. Homodimer. Mn(2+) is required as a cofactor.

It is found in the cytoplasm. The enzyme catalyses 3-methyl-2-oxobutanoate + acetyl-CoA + H2O = (2S)-2-isopropylmalate + CoA + H(+). It participates in amino-acid biosynthesis; L-leucine biosynthesis; L-leucine from 3-methyl-2-oxobutanoate: step 1/4. In terms of biological role, catalyzes the condensation of the acetyl group of acetyl-CoA with 3-methyl-2-oxobutanoate (2-ketoisovalerate) to form 3-carboxy-3-hydroxy-4-methylpentanoate (2-isopropylmalate). The polypeptide is 2-isopropylmalate synthase (Vesicomyosocius okutanii subsp. Calyptogena okutanii (strain HA)).